The primary structure comprises 206 residues: High frequency lysogenization protein HflD homolog (206 aa).

Belongs to the HflD family.

The protein localises to the cytoplasm. Its subcellular location is the cell inner membrane. The chain is High frequency lysogenization protein HflD homolog from Pseudomonas savastanoi pv. phaseolicola (strain 1448A / Race 6) (Pseudomonas syringae pv. phaseolicola (strain 1448A / Race 6)).